A 728-amino-acid chain; its full sequence is Probable subtilase-type serine protease DR_A0283 (728 aa).

An N-terminal signal peptide occupies residues Met1–Ala22. A propeptide spanning residues Ala23–Gln148 is cleaved from the precursor. The Peptidase S8 domain maps to Gln159–Ala471. Catalysis depends on charge relay system residues Asp188, His242, and Ser412.

The protein belongs to the peptidase S8 family.

It localises to the secreted. The protein is Probable subtilase-type serine protease DR_A0283 of Deinococcus radiodurans (strain ATCC 13939 / DSM 20539 / JCM 16871 / CCUG 27074 / LMG 4051 / NBRC 15346 / NCIMB 9279 / VKM B-1422 / R1).